Here is a 235-residue protein sequence, read N- to C-terminus: MKKLSKRMKALSTKIEDRTYAPLEALGIVKENANAKFDETIEAHIRLGIDPKYTDQQLRTTVALPNGTGQSIKIAVITSGENVAKAKSAGADLFGEEDLVESINKGNMDFDLLIATPDMMPKVAKLGRVLGPRGLMPNPKAGTVTGDIASAIKEFKAGKLEFRADKAGIVHVRFGKASFTENALFENLKTLQESIDKNKPSGAKGKYWRSFYLTSTMGPSVQVDINALQDYQPES.

The protein belongs to the universal ribosomal protein uL1 family. Part of the 50S ribosomal subunit.

In terms of biological role, binds directly to 23S rRNA. The L1 stalk is quite mobile in the ribosome, and is involved in E site tRNA release. Protein L1 is also a translational repressor protein, it controls the translation of the L11 operon by binding to its mRNA. This chain is Large ribosomal subunit protein uL1, found in Prochlorococcus marinus subsp. pastoris (strain CCMP1986 / NIES-2087 / MED4).